A 225-amino-acid polypeptide reads, in one-letter code: Ribosomal RNA small subunit methyltransferase G (225 aa).

S-adenosyl-L-methionine is bound by residues G69, 119 to 120 (AE), and R136.

The protein belongs to the methyltransferase superfamily. RNA methyltransferase RsmG family.

It is found in the cytoplasm. Specifically methylates the N7 position of a guanine in 16S rRNA. The protein is Ribosomal RNA small subunit methyltransferase G of Pseudothermotoga lettingae (strain ATCC BAA-301 / DSM 14385 / NBRC 107922 / TMO) (Thermotoga lettingae).